The sequence spans 272 residues: MTSIAGPHKRLEGKVAIITGGASGIGACTAELFHENGAKVVIADIQDDLGQALATKLGGKACYIHCDVSKEDDVINLVDTTVAKYGRLDIMFNNAGIIEGQGLPVSVVESEKSDLDRLLSVNLGGAFLGAKHATRVMVQQRKGCILFTSSLCTSIAGLSGHAYAASKSGVCGLAKNLTPELGKYGIRVNCISPYGLVTGISNISEANRELVEAMLSELGTLSGQTLRADGIAKAALFLASDEAYYVSGINMVVDGGYSVVNPRLADAIYSKL.

17 to 41 (IITGGASGIGACTAELFHENGAKVV) is an NAD(+) binding site. Substrate is bound at residue Ser150. Tyr163 (proton acceptor) is an active-site residue.

It belongs to the short-chain dehydrogenases/reductases (SDR) family.

Has no tropinone reductase activity. The protein is Tropinone reductase-like 1 of Erythroxylum coca (Coca plant).